A 224-amino-acid chain; its full sequence is Uracil-DNA glycosylase (224 aa).

Residue D62 is the Proton acceptor of the active site.

Belongs to the uracil-DNA glycosylase (UDG) superfamily. UNG family.

The protein localises to the cytoplasm. It carries out the reaction Hydrolyzes single-stranded DNA or mismatched double-stranded DNA and polynucleotides, releasing free uracil.. In terms of biological role, excises uracil residues from the DNA which can arise as a result of misincorporation of dUMP residues by DNA polymerase or due to deamination of cytosine. The polypeptide is Uracil-DNA glycosylase (Aliivibrio salmonicida (strain LFI1238) (Vibrio salmonicida (strain LFI1238))).